The sequence spans 590 residues: Muscarinic acetylcholine receptor M3 (590 aa).

Residues 1–67 are Extracellular-facing; sequence MTLHNNNTTS…DPLGGHTIWQ (67 aa). 6 N-linked (GlcNAc...) asparagine glycosylation sites follow: asparagine 6, asparagine 7, asparagine 15, asparagine 41, asparagine 48, and asparagine 53. A helical membrane pass occupies residues 68 to 91; the sequence is VVFIAFLTGILALVTIIGNILVIV. Topologically, residues 92–104 are cytoplasmic; that stretch reads AFKVNKQLKTVNN. The chain crosses the membrane as a helical span at residues 105–130; sequence YFLLSLACADLIIGVISMNLFTTYII. The Extracellular portion of the chain corresponds to 131–142; it reads MNRWALGNLACD. Residues cysteine 141 and cysteine 221 are joined by a disulfide bond. Residues 143–164 traverse the membrane as a helical segment; sequence LWLSIDYVASNASVMNLLVISF. The Cytoplasmic portion of the chain corresponds to 165-184; that stretch reads DRYFSITRPLTYRAKRTTKR. A helical transmembrane segment spans residues 185–206; it reads AGVMIGLAWVISFILWAPAILF. The Extracellular portion of the chain corresponds to 207–229; it reads WQYFVGKRTVPPGECFIQFLSEP. A helical membrane pass occupies residues 230-252; sequence TITFGTAIAAFYMPVTIMTILYW. Residues 253 to 491 lie on the Cytoplasmic side of the membrane; that stretch reads RIYKETEKRT…SLIKEKKAAQ (239 aa). Residues 275–281 carry the Basolateral sorting signal motif; the sequence is AEAENFV. The interval 324-357 is disordered; it reads AEQMDQDHSSSDSWNNNDAAASLENSASSDEEDI. Over residues 334 to 345 the composition is skewed to low complexity; it reads SDSWNNNDAAAS. Serine 385 is modified (phosphoserine). The helical transmembrane segment at 492–514 threads the bilayer; the sequence is TLSAILLAFIITWTPYNIMVLVN. Residues 515 to 526 are Extracellular-facing; that stretch reads TFCDSCIPKTYW. A disulfide bridge connects residues cysteine 517 and cysteine 520. The helical transmembrane segment at 527–546 threads the bilayer; sequence NLGYWLCYINSTVNPVCYAL. At 547–590 the chain is on the cytoplasmic side; it reads CNKTFRTTFKMLLLCQCDKRKRRKQQYQQRQSVIFHKRVPEQAL.

This sequence belongs to the G-protein coupled receptor 1 family. Muscarinic acetylcholine receptor subfamily. CHRM3 sub-subfamily. As to quaternary structure, homodimer; the dimers can form tetramers. Interacts with NALCN. Interacts with TMEM147.

Its subcellular location is the cell membrane. The protein localises to the postsynaptic cell membrane. It localises to the basolateral cell membrane. It is found in the endoplasmic reticulum membrane. Its function is as follows. The muscarinic acetylcholine receptor mediates various cellular responses, including inhibition of adenylate cyclase, breakdown of phosphoinositides and modulation of potassium channels through the action of G proteins. Primary transducing effect is Pi turnover. The polypeptide is Muscarinic acetylcholine receptor M3 (CHRM3) (Sus scrofa (Pig)).